The following is a 98-amino-acid chain: MVKKAHSFRRKTRGKLSKHPRRRGLPPLTRFLQEFEVGQKVHIVIEPSYHKGMPDPRFHGRTGTVVGKRGDAYIVQITDGGKVKTFFIHPVHLRPQKG.

The span at Met1–Gly24 shows a compositional bias: basic residues. The tract at residues Met1 to Pro27 is disordered.

This sequence belongs to the eukaryotic ribosomal protein eL21 family. As to quaternary structure, part of the 50S ribosomal subunit.

The sequence is that of Large ribosomal subunit protein eL21 from Thermococcus kodakarensis (strain ATCC BAA-918 / JCM 12380 / KOD1) (Pyrococcus kodakaraensis (strain KOD1)).